A 291-amino-acid polypeptide reads, in one-letter code: Pyridoxal 5'-phosphate synthase subunit PdxS (291 aa).

Asp23 is a D-ribose 5-phosphate binding site. Lys80 functions as the Schiff-base intermediate with D-ribose 5-phosphate in the catalytic mechanism. Gly152 serves as a coordination point for D-ribose 5-phosphate. Position 164 (Arg164) interacts with D-glyceraldehyde 3-phosphate. D-ribose 5-phosphate-binding positions include Gly213 and 234–235 (GS).

It belongs to the PdxS/SNZ family. In the presence of PdxT, forms a dodecamer of heterodimers.

It catalyses the reaction aldehydo-D-ribose 5-phosphate + D-glyceraldehyde 3-phosphate + L-glutamine = pyridoxal 5'-phosphate + L-glutamate + phosphate + 3 H2O + H(+). It functions in the pathway cofactor biosynthesis; pyridoxal 5'-phosphate biosynthesis. Its function is as follows. Catalyzes the formation of pyridoxal 5'-phosphate from ribose 5-phosphate (RBP), glyceraldehyde 3-phosphate (G3P) and ammonia. The ammonia is provided by the PdxT subunit. Can also use ribulose 5-phosphate and dihydroxyacetone phosphate as substrates, resulting from enzyme-catalyzed isomerization of RBP and G3P, respectively. The polypeptide is Pyridoxal 5'-phosphate synthase subunit PdxS (Haemophilus influenzae (strain ATCC 51907 / DSM 11121 / KW20 / Rd)).